Consider the following 222-residue polypeptide: Probable transaldolase (222 aa).

Lys91 serves as the catalytic Schiff-base intermediate with substrate.

Belongs to the transaldolase family. Type 3B subfamily.

The protein resides in the cytoplasm. It catalyses the reaction D-sedoheptulose 7-phosphate + D-glyceraldehyde 3-phosphate = D-erythrose 4-phosphate + beta-D-fructose 6-phosphate. Its pathway is carbohydrate degradation; pentose phosphate pathway; D-glyceraldehyde 3-phosphate and beta-D-fructose 6-phosphate from D-ribose 5-phosphate and D-xylulose 5-phosphate (non-oxidative stage): step 2/3. Functionally, transaldolase is important for the balance of metabolites in the pentose-phosphate pathway. This Chlorobium chlorochromatii (strain CaD3) protein is Probable transaldolase.